We begin with the raw amino-acid sequence, 689 residues long: Glycine--tRNA ligase beta subunit (689 aa).

Belongs to the class-II aminoacyl-tRNA synthetase family. As to quaternary structure, tetramer of two alpha and two beta subunits.

The protein localises to the cytoplasm. The enzyme catalyses tRNA(Gly) + glycine + ATP = glycyl-tRNA(Gly) + AMP + diphosphate. This Shewanella baltica (strain OS223) protein is Glycine--tRNA ligase beta subunit.